Consider the following 596-residue polypeptide: MEALLSTPINPNNFPAKLWRLVNSPRYRSIRWDGRGEGLLIDQPLFEAELLSPPGPGGGGGTAGAGAEPELFKTTSFTSFIRQLNLYGFRKVVLGGPGGGKPAGNGPLHHFHNPHFRRDQPQLLVHLKRLTSANKAKLAAGLEVPCRPPNRFQRLLITSASAATAPLQHQQPPPPAGPRPEPHGPVAVGQFHRSFRRDSLSPYSCVSTPSHDHSTYPLKGLDRTPVPHRIWQNSLGMHPGQVETSPTFSDKGVPFPVLQRFPTEVTYTLQPSTTSVHVQQGPQTMVSSSQKYSNYTPSAQYSQAYYPTAVLQCCSPTHMDALSSCVTPTASSYAHCNYFQNPSMQSSYPVEFLPSNWPCSTTDENTKTEVNLEAVFQIVDELHSSPKLEMVKVEPVENQCPTSPSYRGQHILANSNNSNPCSASQASQLEPLTPVGSDIMSFVVGTEQAVACSLPQSPEYIYTIHTAQPVENSTIQESAAIQQAHVKLKEHLNHNPSPSSVVFVQEGPPFSTHQVDANIKCQTSSRENILPSEQMGFLISEMGPASKPSEDTGLATPARYREHRSNSQQGKSPDLHLLVDVACKQERFPKEEELKE.

A DNA-binding region spans residues 10–200; the sequence is NPNNFPAKLW…FHRSFRRDSL (191 aa). The segment at 541–576 is disordered; it reads EMGPASKPSEDTGLATPARYREHRSNSQQGKSPDLH. Residue serine 572 is modified to Phosphoserine.

It belongs to the HSF family. As to quaternary structure, homooligomer.

The protein localises to the nucleus. Its subcellular location is the chromosome. Its function is as follows. DNA-binding transcription factor that is essential for male fertility, spermatogenesis and meiotic prophase progression in spermatocytes under non-stress conditions. Positvely and negatively regulates gene expression to ensure progression of meiotic prophase beyond pachytene stage in spermatocytes. Plays a role in male germline meiotic sex chromosome remodeling and silencing through regulation of SMARCA4. This chain is Heat shock factor protein 5 (HSF5), found in Homo sapiens (Human).